Reading from the N-terminus, the 193-residue chain is Xanthine phosphoribosyltransferase (193 aa).

Xanthine-binding residues include L20 and T27. A 5-phospho-alpha-D-ribose 1-diphosphate-binding site is contributed by 128 to 132; that stretch reads ANGQA. K156 provides a ligand contact to xanthine.

This sequence belongs to the purine/pyrimidine phosphoribosyltransferase family. Xpt subfamily. Homodimer.

Its subcellular location is the cytoplasm. The catalysed reaction is XMP + diphosphate = xanthine + 5-phospho-alpha-D-ribose 1-diphosphate. It participates in purine metabolism; XMP biosynthesis via salvage pathway; XMP from xanthine: step 1/1. In terms of biological role, converts the preformed base xanthine, a product of nucleic acid breakdown, to xanthosine 5'-monophosphate (XMP), so it can be reused for RNA or DNA synthesis. This is Xanthine phosphoribosyltransferase from Streptococcus pyogenes serotype M5 (strain Manfredo).